A 914-amino-acid polypeptide reads, in one-letter code: Effector protein hopAE1 (914 aa).

A compositionally biased stretch (polar residues) spans 1 to 13 (MMPSQITRSSHSS). The disordered stretch occupies residues 1 to 31 (MMPSQITRSSHSSLPEVAPASGDAAGVSEQT).

It belongs to the HopW family.

The protein localises to the secreted. The chain is Effector protein hopAE1 (hopAE1) from Pseudomonas syringae pv. syringae (strain B728a).